Reading from the N-terminus, the 224-residue chain is Attacin-A (224 aa).

The first 20 residues, 1 to 20 (MQKTSILIVALVALFAITEA), serve as a signal peptide directing secretion. A propeptide spanning residues 21–34 (LPSLPTTGPIRVRR) is cleaved from the precursor.

It belongs to the attacin/sarcotoxin-2 family. In terms of tissue distribution, hemolymph (at protein level).

The protein resides in the secreted. Its function is as follows. Hemolymph antibacterial protein. In Drosophila melanogaster (Fruit fly), this protein is Attacin-A (AttA).